A 443-amino-acid polypeptide reads, in one-letter code: Probable glycine dehydrogenase (decarboxylating) subunit 1 (443 aa).

This sequence belongs to the GcvP family. N-terminal subunit subfamily. The glycine cleavage system is composed of four proteins: P, T, L and H. In this organism, the P 'protein' is a heterodimer of two subunits.

The enzyme catalyses N(6)-[(R)-lipoyl]-L-lysyl-[glycine-cleavage complex H protein] + glycine + H(+) = N(6)-[(R)-S(8)-aminomethyldihydrolipoyl]-L-lysyl-[glycine-cleavage complex H protein] + CO2. The glycine cleavage system catalyzes the degradation of glycine. The P protein binds the alpha-amino group of glycine through its pyridoxal phosphate cofactor; CO(2) is released and the remaining methylamine moiety is then transferred to the lipoamide cofactor of the H protein. The chain is Probable glycine dehydrogenase (decarboxylating) subunit 1 from Chloroherpeton thalassium (strain ATCC 35110 / GB-78).